Consider the following 67-residue polypeptide: Probable tautomerase bsl7456 (67 aa).

The active-site Proton acceptor; via imino nitrogen is proline 2.

Belongs to the 4-oxalocrotonate tautomerase family.

The sequence is that of Probable tautomerase bsl7456 from Bradyrhizobium diazoefficiens (strain JCM 10833 / BCRC 13528 / IAM 13628 / NBRC 14792 / USDA 110).